The chain runs to 1012 residues: Roundabout homolog 4 (1012 aa).

The N-terminal stretch at 1-27 (MGSGGTGLLGTEWPLPLLLLFIMGGEA) is a signal peptide. 2 consecutive Ig-like C2-type domains span residues 32-132 (PQIL…ARLS) and 138-225 (EDFQ…ARVS). Disulfide bonds link C53/C115 and C159/C208. N-linked (GlcNAc...) asparagine glycosylation is found at N201 and N247. 2 Fibronectin type-III domains span residues 249-346 (TLLN…LPEQ) and 348-443 (PSAP…LEQA). N-linked (GlcNAc...) asparagine glycans are attached at residues N361, N390, and N397. 2 disordered regions span residues 533–553 (TSGS…GLDP) and 586–616 (LIAE…AGTS). Low complexity predominate over residues 534-550 (SGSRDLSSSSSLSSRLG). A compositionally biased stretch (pro residues) spans 592–601 (SSPPVRPSPK). 2 N-linked (GlcNAc...) asparagine glycosylation sites follow: N681 and N713. A disordered region spans residues 711 to 801 (HRNSSELASR…LEEEEDQDSV (91 aa)). Residues 745–759 (LQAPSSDPLPAAPLS) are compositionally biased toward low complexity. Over residues 760–771 (VLNSSRPSSPQA) the composition is skewed to polar residues. Residues N762 and N783 are each glycosylated (N-linked (GlcNAc...) asparagine). Residues 772 to 791 (SFLSCPSPSSSNLSSSSLSS) are compositionally biased toward low complexity. Residues S814 and S947 each carry the phosphoserine modification. Positions 980–1012 (RLGRGLPPWPPDSRASSQRSWLTGAVPKAGDSS) are disordered.

The protein belongs to the immunoglobulin superfamily. ROBO family. As to quaternary structure, interacts with SLIT2 and ENAH. As to expression, expressed specifically in embryo and adult vascular endothelium.

In terms of biological role, receptor for Slit proteins, at least for SLIT2, and seems to be involved in angiogenesis and vascular patterning. May mediate the inhibition of primary endothelial cell migration by Slit proteins. Involved in the maintenance of endothelial barrier organization and function. In Mus musculus (Mouse), this protein is Roundabout homolog 4 (Robo4).